We begin with the raw amino-acid sequence, 1254 residues long: Structural polyprotein (1254 aa).

The segment at 1–33 is necessary for nucleocapsid assembly and virus assembly; that stretch reads MFPFQPMYPMQPMPYRNPFAAPRRPWFPRTDPF. A host transcription inhibition region spans residues 33 to 68; sequence FLAMQVQELTRSMANLTFKQRRDAPPEGPSAKKPKK. The short motif at 41 to 48 is the Supraphysiological nuclear export signal element; it reads LTRSMANL. Positions 45–119 are disordered; it reads MANLTFKQRR…KKPGKRQRMV (75 aa). A Nuclear localization signal motif is present at residues 64–68; sequence KKPKK. The span at 80–92 shows a compositional bias: basic residues; sequence GKKKKNQGKKKAK. Residues 91–127 form a binding to the viral RNA region; it reads AKTGPPNPKAQNGNKKKTNKKPGKRQRMVMKLESDKT. 2 positions are modified to phosphothreonine: threonine 93 and threonine 108. Residues 104-118 show a composition bias toward basic residues; that stretch reads NKKKTNKKPGKRQRM. The tract at residues 112-126 is ribosome-binding; it reads PGKRQRMVMKLESDK. Serine 124 is modified (phosphoserine). Positions 126 to 275 constitute a Peptidase S3 domain; it reads KTFPIMLEGK…KYTPENCEQW (150 aa). Threonine 127 carries the phosphothreonine modification. Catalysis depends on charge relay system residues histidine 152, aspartate 174, and serine 226. The tract at residues 276-287 is functions as an uncleaved signal peptide for the precursor of protein E3/E2; that stretch reads SLVTTMCLLANV. The Extracellular segment spans residues 276–701; sequence SLVTTMCLLA…HYYHRYPMST (426 aa). N-linked (GlcNAc...) asparagine; by host glycans are attached at residues asparagine 286, asparagine 546, and asparagine 652. A helical membrane pass occupies residues 702–722; the sequence is ILGLSICAAIATVSVAASTWL. The Cytoplasmic portion of the chain corresponds to 723-757; sequence FCRSRVACLTPYRLTPNARIPFCLAVLCCARTARA. S-palmitoyl cysteine; by host attachment occurs at residues cysteine 730, cysteine 750, and cysteine 751. The tract at residues 730-750 is transient transmembrane before p62-6K protein processing; it reads CLTPYRLTPNARIPFCLAVLC. The Extracellular segment spans residues 758–772; the sequence is ETTWESLDHLWNNNQ. A helical membrane pass occupies residues 773 to 793; the sequence is QMFWIQLLIPLAALIVVTRLL. Residues 794 to 795 lie on the Cytoplasmic side of the membrane; that stretch reads RC. The chain crosses the membrane as a helical span at residues 796 to 816; sequence VCCVVPFLVMAGAAAGAYEHA. The Extracellular segment spans residues 817–1224; that stretch reads TTMPSQAGIS…SKTAWTWLTS (408 aa). 4 cysteine pairs are disulfide-bonded: cysteine 861–cysteine 926, cysteine 874–cysteine 906, cysteine 875–cysteine 908, and cysteine 880–cysteine 890. Residues 896–913 are E1 fusion peptide loop; the sequence is VYPFMWGGAYCFCDTENT. N-linked (GlcNAc...) asparagine; by host glycosylation is present at asparagine 946. Intrachain disulfides connect cysteine 1071-cysteine 1083, cysteine 1113-cysteine 1188, cysteine 1118-cysteine 1192, and cysteine 1140-cysteine 1182. A helical membrane pass occupies residues 1225–1245; sequence LLGGSAVIIIIGLVLATIVAM. Residues 1246–1254 lie on the Cytoplasmic side of the membrane; it reads YVLTNQKHN.

Homodimer. Homomultimer. Interacts with host karyopherin KPNA4; this interaction allows the nuclear import of the viral capsid protein. Interacts with spike glycoprotein E2. Interacts with host IRAK1; the interaction leads to inhibition of IRAK1-dependent signaling. Part of a tetrameric complex composed of host CRM1, host importin alpha/beta dimer and the viral capsid; this complex blocks the receptor-mediated transport through the nuclear pore. Interacts with host phosphatase PPP1CA; this interaction dephosphorylates the capsid protein, which increases its ability to bind to the viral genome. As to quaternary structure, the precursor of protein E3/E2 and E1 form a heterodimer shortly after synthesis. In terms of assembly, interacts with spike glycoprotein E2. The precursor of protein E3/E2 and E1 form a heterodimer shortly after synthesis. Processing of the precursor of protein E3/E2 into E2 and E3 results in a heterodimer of the spike glycoproteins E2 and E1. Spike at virion surface are constituted of three E2-E1 heterodimers. After target cell attachment and endocytosis, E1 change conformation to form homotrimers. Interacts with 6K protein. Interacts with host LDLRAD3; this interaction mediates viral entry to the host cell. Interacts with spike glycoprotein E1. Processing of the precursor of protein E3/E2 into E2 and E3 results in a heterodimer of the spike glycoproteins E2 and E1. Spike at virion surface are constituted of a trimer of E2-E1 heterodimers. Interacts with 6K protein. Interacts with host LDLRAD3; this interaction mediates viral entry to the host cell. As to quaternary structure, oligomer. Interacts with spike glycoprotein E1. Interacts with spike glycoprotein E2. In terms of processing, structural polyprotein: Specific enzymatic cleavages in vivo yield mature proteins. Capsid protein is auto-cleaved during polyprotein translation, unmasking a signal peptide at the N-terminus of the precursor of E3/E2. The remaining polyprotein is then targeted to the host endoplasmic reticulum, where host signal peptidase cleaves it into pE2, 6K and E1 proteins. pE2 is further processed to mature E3 and E2 by host furin in trans-Golgi vesicle. Palmitoylated via thioester bonds. These palmitoylations may induce disruption of the C-terminus transmembrane. This would result in the reorientation of E2 C-terminus from lumenal to cytoplasmic side. Post-translationally, phosphorylated on serine and threonine residues. In terms of processing, N-glycosylated. Palmitoylated via thioester bonds.

It localises to the virion. Its subcellular location is the host cytoplasm. The protein resides in the host cell membrane. The protein localises to the host nucleus. It is found in the virion membrane. The catalysed reaction is Autocatalytic release of the core protein from the N-terminus of the togavirus structural polyprotein by hydrolysis of a -Trp-|-Ser- bond.. In terms of biological role, forms an icosahedral capsid with a T=4 symmetry composed of 240 copies of the capsid protein surrounded by a lipid membrane through which penetrate 80 spikes composed of trimers of E1-E2 heterodimers. The capsid protein binds to the viral RNA genome at a site adjacent to a ribosome binding site for viral genome translation following genome release. Possesses a protease activity that results in its autocatalytic cleavage from the nascent structural protein. Following its self-cleavage, the capsid protein transiently associates with ribosomes, and within several minutes the protein binds to viral RNA and rapidly assembles into icosahedric core particles. The resulting nucleocapsid eventually associates with the cytoplasmic domain of the spike glycoprotein E2 at the cell membrane, leading to budding and formation of mature virions. In case of infection, new virions attach to target cells and after clathrin-mediated endocytosis their membrane fuses with the host endosomal membrane. This leads to the release of the nucleocapsid into the cytoplasm, followed by an uncoating event necessary for the genomic RNA to become accessible. The uncoating might be triggered by the interaction of capsid proteins with ribosomes. Binding of ribosomes would release the genomic RNA since the same region is genomic RNA-binding and ribosome-binding. Specifically inhibits interleukin-1 receptor-associated kinase 1/IRAK1-dependent signaling during viral entry, representing a means by which the alphaviruses may evade innate immune detection and activation prior to viral gene expression. Inhibits host transcription. Forms a tetrameric complex with XPO1/CRM1 and the nuclear import receptor importin. This complex blocks the central channel of host nuclear pores thereby inhibiting the receptor-mediated nuclear transport and thus the host mRNA and rRNA transcription. The inhibition of transcription is linked to a cytopathic effect on the host cell. Functionally, provides the signal sequence for the translocation of the precursor of protein E3/E2 to the host endoplasmic reticulum. Furin-cleaved E3 remains associated with spike glycoprotein E1 and mediates pH protection of the latter during the transport via the secretory pathway. After virion release from the host cell, the assembly protein E3 is gradually released in the extracellular space. Its function is as follows. Plays a role in viral attachment to target host cell, by binding to the cell receptor LDLRAD3. Synthesized as a p62 precursor which is processed by furin at the cell membrane just before virion budding, giving rise to E2-E1 heterodimer. The p62-E1 heterodimer is stable, whereas E2-E1 is unstable and dissociate at low pH. p62 is processed at the last step, presumably to avoid E1 fusion activation before its final export to cell surface. E2 C-terminus contains a transitory transmembrane that would be disrupted by palmitoylation, resulting in reorientation of the C-terminal tail from lumenal to cytoplasmic side. This step is critical since E2 C-terminus is involved in budding by interacting with capsid proteins. This release of E2 C-terminus in cytoplasm occurs lately in protein export, and precludes premature assembly of particles at the endoplasmic reticulum membrane. Acts as a viroporin that participates in virus glycoprotein processing and transport to the plasma membrane, cell permeabilization and budding of viral particles. Disrupts the calcium homeostasis of the cell, probably at the endoplasmic reticulum level. This leads to cytoplasmic calcium elevation. Because of its lipophilic properties, the 6K protein is postulated to influence the selection of lipids that interact with the transmembrane domains of the glycoproteins, which, in turn, affects the deformability of the bilayer required for the extreme curvature that occurs as budding proceeds. Present in low amount in virions, about 3% compared to viral glycoproteins. In terms of biological role, class II viral fusion protein. Fusion activity is inactive as long as E1 is bound to E2 in mature virion. After virus attachment to cell receptor LDLRAD3 and endocytosis, acidification of the endosome would induce dissociation of E1/E2 heterodimer and concomitant trimerization of the E1 subunits. This E1 trimer is fusion active, and promotes release of viral nucleocapsid in cytoplasm after endosome and viral membrane fusion. Efficient fusion requires the presence of cholesterol and sphingolipid in the target membrane. Fusion is optimal at levels of about 1 molecule of cholesterol per 2 molecules of phospholipids, and is specific for sterols containing a 3-beta-hydroxyl group. This Bos taurus (Bovine) protein is Structural polyprotein.